The chain runs to 295 residues: uncharacterized protein (295 aa).

The protein localises to the plastid. The protein resides in the chloroplast. This is an uncharacterized protein from Euglena gracilis.